We begin with the raw amino-acid sequence, 362 residues long: Snurportin-1 (362 aa).

Methionine 1 carries the post-translational modification N-acetylmethionine. Disordered regions lie at residues 1–40 and 69–90; these read MEEL…SLEQ and DWTG…MDVD. The necessary for interaction with KPNB1 and m3G-cap U1 and U5 snRNP import receptor activity stretch occupies residues 1–65; that stretch reads MEELSQALAG…LDYVNHARRL (65 aa). The interval 1–160 is necessary for interaction with XPO1; sequence MEELSQALAG…NTFPSLLPGG (160 aa). The IBB domain occupies 11 to 73; it reads SFSVSQDLNS…RLAEDDWTGM (63 aa). Residues 12–22 are compositionally biased toward polar residues; the sequence is FSVSQDLNSTA. A compositionally biased stretch (acidic residues) spans 69-89; it reads DWTGMESEEEEEKKDDEEMDV. Serine 75 carries the post-translational modification Phosphoserine. Residues 128–130 form an interaction with m3G-cap structure region; sequence GKR. The interval 210 to 330 is necessary for binding to the m3G-cap structure; the sequence is LHSKLPEEEG…GIMGKLTPRA (121 aa). Positions 319–362 are disordered; the sequence is KEGIMGKLTPRASENGHYELEHLSTPKLKSPPQRPNHPESLMEN. Over residues 332-342 the composition is skewed to basic and acidic residues; it reads ENGHYELEHLS.

It belongs to the snurportin family. As to quaternary structure, component of an import snRNP complex composed of KPNB1, SNUPN, SMN1 and ZNF259. Component of a nuclear export receptor complex composed of KPNB1, Ran, SNUPN and XPO1. Found in a trimeric export complex with SNUPN, Ran and XPO1. Interacts (via IBB domain) with KPNB1; the interaction is direct. Interacts with DDX20, IPO7, SMN1, SNRPB and XPO1. Interacts directly with XPO1. Its interaction with XPO1 and binding to m3G-cap U snRNPs appears to be mutually exclusive. Can form homomers.

It localises to the nucleus. Its subcellular location is the cytoplasm. Its function is as follows. Functions as an U snRNP-specific nuclear import adapter. Involved in the trimethylguanosine (m3G)-cap-dependent nuclear import of U snRNPs. Binds specifically to the terminal m3G-cap U snRNAs. This chain is Snurportin-1 (SNUPN), found in Bos taurus (Bovine).